The primary structure comprises 507 residues: (6-4) photolyase (507 aa).

Residues 9-10 (GD), 32-40 (CEVMAEASY), and G105 contribute to the 6,7-dimethyl-8-(1-D-ribityl)lumazine site. FAD-binding positions include 265–269 (HSLLS) and N273. C350 lines the [4Fe-4S] cluster pocket. FAD contacts are provided by residues 363–366 (YAHH), D397, and N406. Residues C438, C441, and C454 each contribute to the [4Fe-4S] cluster site.

Belongs to the iron-sulfur bacterial cryptochrome/photolyase (FeS-BCP) family. FAD is required as a cofactor. The cofactor is 6,7-dimethyl-8-(1-D-ribityl)lumazine. [4Fe-4S] cluster serves as cofactor.

It catalyses the reaction (6-4) photoproduct (in DNA) = 2 pyrimidine residues (in DNA).. In terms of biological role, photolyase involved in the repair of UV-induced (6-4) lesions in DNA. Catalyzes the photoreactivation of (6-4) pyrimidine-pyrimidone photoproducts by using blue-light energy. Can repair (6-4) photoproducts in ssDNA as well as in dsDNA. The sequence is that of (6-4) photolyase from Agrobacterium fabrum (strain C58 / ATCC 33970) (Agrobacterium tumefaciens (strain C58)).